The primary structure comprises 858 residues: DNA mismatch repair protein MutS (858 aa).

600 to 607 (GPNMSGKS) is an ATP binding site.

Belongs to the DNA mismatch repair MutS family.

Its function is as follows. This protein is involved in the repair of mismatches in DNA. It is possible that it carries out the mismatch recognition step. This protein has a weak ATPase activity. The polypeptide is DNA mismatch repair protein MutS (Bacillus pumilus (strain SAFR-032)).